The primary structure comprises 190 residues: Movement protein (190 aa).

It belongs to the tombusvirus/aureusvirus movement protein p22 family.

Its subcellular location is the host membrane. In terms of biological role, transports viral genome to neighboring plant cells directly through plasmosdesmata, without any budding. The movement protein allows efficient cell to cell propagation, by bypassing the host cell wall barrier. This Cucumber necrosis virus (CNV) protein is Movement protein.